Reading from the N-terminus, the 429-residue chain is Enolase (429 aa).

Gln-162 contributes to the (2R)-2-phosphoglycerate binding site. Glu-204 functions as the Proton donor in the catalytic mechanism. The Mg(2+) site is built by Asp-242, Glu-289, and Asp-316. 4 residues coordinate (2R)-2-phosphoglycerate: Lys-341, Arg-370, Ser-371, and Lys-392. Lys-341 acts as the Proton acceptor in catalysis.

It belongs to the enolase family. Mg(2+) serves as cofactor.

It localises to the cytoplasm. It is found in the secreted. Its subcellular location is the cell surface. The enzyme catalyses (2R)-2-phosphoglycerate = phosphoenolpyruvate + H2O. It participates in carbohydrate degradation; glycolysis; pyruvate from D-glyceraldehyde 3-phosphate: step 4/5. In terms of biological role, catalyzes the reversible conversion of 2-phosphoglycerate (2-PG) into phosphoenolpyruvate (PEP). It is essential for the degradation of carbohydrates via glycolysis. In Flavobacterium psychrophilum (strain ATCC 49511 / DSM 21280 / CIP 103535 / JIP02/86), this protein is Enolase.